The primary structure comprises 78 residues: Large ribosomal subunit protein bL28 (78 aa).

Positions 1-26 are disordered; sequence MARVCQVTGKRPMSGHNVSHANNKTK.

It belongs to the bacterial ribosomal protein bL28 family.

This chain is Large ribosomal subunit protein bL28, found in Nitrosomonas europaea (strain ATCC 19718 / CIP 103999 / KCTC 2705 / NBRC 14298).